An 810-amino-acid polypeptide reads, in one-letter code: Phospholipase D alpha 1 (810 aa).

Positions 1 to 36 (MAQHLLHGTLHATIYEVDDLHTGGLRSGFFGKILAN) are excised as a propeptide. The region spanning 1-126 (MAQHLLHGTL…IHGEEVDQWV (126 aa)) is the C2 domain. Residue Asp187 participates in Ca(2+) binding. The PLD phosphodiesterase 1 domain maps to 327–366 (AMFTHHQKIVVVDSEMPSRGGSQMRRIVSFVGGIDLCDGR). Active-site residues include His332, Lys334, and Asp339. Residue His332 participates in a 1,2-diacyl-sn-glycero-3-phosphate binding. Ca(2+) is bound by residues His372 and His406. 2 residues coordinate a 1,2-diacyl-sn-glycero-3-phosphate: Gln522 and His661. The PLD phosphodiesterase 2 domain occupies 656 to 683 (FMIYVHTKMMIVDDEYIIIGSANINQRS). Catalysis depends on residues His661, Lys663, and Asp668. A Ca(2+)-binding site is contributed by Glu722.

The protein belongs to the phospholipase D family. C2-PLD subfamily. It depends on Ca(2+) as a cofactor.

It localises to the cytoplasm. The protein resides in the membrane. The catalysed reaction is a 1,2-diacyl-sn-glycero-3-phosphocholine + H2O = a 1,2-diacyl-sn-glycero-3-phosphate + choline + H(+). Hydrolyzes glycerol-phospholipids at the terminal phosphodiesteric bond. Plays an important role in various cellular processes, including phytohormone action, vesicular trafficking, secretion, cytoskeletal arrangement, meiosis, tumor promotion, pathogenesis, membrane deterioration and senescence. This chain is Phospholipase D alpha 1 (PLD1), found in Brassica oleracea var. capitata (Cabbage).